The primary structure comprises 172 residues: UPF0102 protein AM1_3954 (172 aa).

Belongs to the UPF0102 family.

The sequence is that of UPF0102 protein AM1_3954 from Acaryochloris marina (strain MBIC 11017).